Consider the following 351-residue polypeptide: Biotin synthase (351 aa).

The Radical SAM core domain maps to 73-298; it reads PEVEVEGIIS…RTILRYSGGR (226 aa). Cysteine 88, cysteine 92, and cysteine 95 together coordinate [4Fe-4S] cluster. [2Fe-2S] cluster-binding residues include cysteine 131, cysteine 164, cysteine 223, and arginine 293.

The protein belongs to the radical SAM superfamily. Biotin synthase family. As to quaternary structure, homodimer. Requires [4Fe-4S] cluster as cofactor. It depends on [2Fe-2S] cluster as a cofactor.

It carries out the reaction (4R,5S)-dethiobiotin + (sulfur carrier)-SH + 2 reduced [2Fe-2S]-[ferredoxin] + 2 S-adenosyl-L-methionine = (sulfur carrier)-H + biotin + 2 5'-deoxyadenosine + 2 L-methionine + 2 oxidized [2Fe-2S]-[ferredoxin]. The protein operates within cofactor biosynthesis; biotin biosynthesis; biotin from 7,8-diaminononanoate: step 2/2. Catalyzes the conversion of dethiobiotin (DTB) to biotin by the insertion of a sulfur atom into dethiobiotin via a radical-based mechanism. The chain is Biotin synthase from Frankia alni (strain DSM 45986 / CECT 9034 / ACN14a).